The sequence spans 162 residues: ATP synthase subunit delta, mitochondrial (162 aa).

A mitochondrion-targeting transit peptide spans 1-24; that stretch reads MFSVARTAIRGAARPAVRIARRGY.

As to quaternary structure, F-type ATP synthases have 2 components, the catalytic core F(1) and the membrane-embedded component F(0), linked together by a central stalk and a peripheral stalk. The central stalk, also called rotor shaft, is often seen as part of F(1). The peripheral stalk is seen as part of F(0). F(0) contains the membrane channel next to the rotor. F-type ATP synthases form dimers but each monomer functions independently in ATP generation. The dimer consists of 17 different polypeptides: ATP1 (subunit alpha, 3 molecules per monomer, part of F(1)), ATP2 (subunit beta, 3 copies per monomer, part of F(1)), ATP3 (subunit gamma, part of the central stalk), ATP4 (subunit b, part of the peripheral stalk), ATP5/OSCP (subunit 5/OSCP, part of the peripheral stalk), ATP6 (subunit a, part of the peripheral stalk), ATP7 (subunit d, part of the peripheral stalk), ATP8 (subunit 8, part of the peripheral stalk), OLI1 (subunit c, part of the rotor, 10 molecules per monomer), ATP14 (subunit h, part of the peripheral stalk), ATP15 (subunit epsilon, part of the central stalk), ATP16 (subunit delta, part of the central stalk), ATP17 (subunit f, part of the peripheral stalk), ATP18 (subunit i/j, part of the peripheral stalk), ATP19 (subunit k, dimer-specific, at interface between monomers), ATP20 (subunit g, at interface between monomers), TIM11 (subunit e, at interface between monomers).

The protein resides in the mitochondrion inner membrane. Functionally, mitochondrial membrane ATP synthase (F(1)F(0) ATP synthase or Complex V) produces ATP from ADP in the presence of a proton gradient across the membrane which is generated by electron transport complexes of the respiratory chain. F-type ATP synthases consist of two structural domains, F(1) - containing the extramembraneous catalytic core, and F(0) - containing the membrane proton channel, linked together by a central stalk and a peripheral stalk. During catalysis, ATP synthesis in the catalytic domain of F(1) is coupled via a rotary mechanism of the central stalk subunits to proton translocation. Part of the complex F(1) domain and the central stalk which is part of the complex rotary element. Rotation of the central stalk against the surrounding alpha/ATP1(3)beta/ATP2(3) subunits leads to hydrolysis of ATP in three separate catalytic sites on the beta/ATP2 subunits. This chain is ATP synthase subunit delta, mitochondrial, found in Yarrowia lipolytica (strain CLIB 122 / E 150) (Yeast).